A 724-amino-acid chain; its full sequence is Catalase-peroxidase (724 aa).

The tryptophyl-tyrosyl-methioninium (Trp-Tyr) (with M-252) cross-link spans 98-226; sequence WHSAGTYRIA…LAAVMMGLIY (129 aa). His99 acts as the Proton acceptor in catalysis. The tryptophyl-tyrosyl-methioninium (Tyr-Met) (with W-98) cross-link spans 226–252; sequence YVNPEGVDGNPDPLKTAQDMRVTFARM. His267 lines the heme b pocket.

This sequence belongs to the peroxidase family. Peroxidase/catalase subfamily. Homodimer or homotetramer. Requires heme b as cofactor. Formation of the three residue Trp-Tyr-Met cross-link is important for the catalase, but not the peroxidase activity of the enzyme.

The enzyme catalyses H2O2 + AH2 = A + 2 H2O. It catalyses the reaction 2 H2O2 = O2 + 2 H2O. Its function is as follows. Bifunctional enzyme with both catalase and broad-spectrum peroxidase activity. This Vibrio cholerae serotype O1 (strain ATCC 39315 / El Tor Inaba N16961) protein is Catalase-peroxidase.